The primary structure comprises 173 residues: Adenine phosphoribosyltransferase (173 aa).

It belongs to the purine/pyrimidine phosphoribosyltransferase family. Homodimer.

The protein resides in the cytoplasm. The catalysed reaction is AMP + diphosphate = 5-phospho-alpha-D-ribose 1-diphosphate + adenine. It participates in purine metabolism; AMP biosynthesis via salvage pathway; AMP from adenine: step 1/1. Catalyzes a salvage reaction resulting in the formation of AMP, that is energically less costly than de novo synthesis. The sequence is that of Adenine phosphoribosyltransferase from Desulfitobacterium hafniense (strain Y51).